The chain runs to 938 residues: Protein SEY1 (938 aa).

The tract at residues 1-159 is disordered; sequence MTSQSHGAPP…QKSAKSTPGS (159 aa). The Cytoplasmic portion of the chain corresponds to 1-839; the sequence is MTSQSHGAPP…KRSTIQSTTQ (839 aa). Positions 33-45 are enriched in low complexity; it reads SVSSSHSSHSPVT. The segment covering 74–94 has biased composition (pro residues); sequence IAAPEPIAAPEPIPAPEPIAA. The segment covering 100 to 118 has biased composition (basic and acidic residues); that stretch reads LKSEHKPVEREHKPVERKP. Residues 146–158 show a composition bias toward polar residues; that stretch reads VPTSQKSAKSTPG. Positions 192-423 constitute a GB1/RHD3-type G domain; the sequence is GLDYHVVAVF…DPNYVFKPVY (232 aa). A GTP-binding site is contributed by 202–209; it reads GSQSTGKS. Residues 603–630 are a coiled coil; the sequence is SYDDTLAALEQELDTLRDHKSKVEIDRL. Residues 840–860 form a helical membrane-spanning segment; that stretch reads IPLYMYGLLLLLGWNEIMAVL. The Lumenal portion of the chain corresponds to 861 to 863; that stretch reads RSP. The chain crosses the membrane as a helical span at residues 864–884; it reads VYFMFLLVAAGAAYVIHTLHL. The Cytoplasmic segment spans residues 885 to 938; that stretch reads WGPLTHMTNTMIAEATDMAKAKLKQVLNEAPTGETREREAPVGSSRDDVELKDL. Residues 911 to 938 are disordered; that stretch reads LNEAPTGETREREAPVGSSRDDVELKDL. Positions 918 to 938 are enriched in basic and acidic residues; that stretch reads ETREREAPVGSSRDDVELKDL.

This sequence belongs to the TRAFAC class dynamin-like GTPase superfamily. GB1/RHD3 GTPase family. RHD3 subfamily.

It is found in the endoplasmic reticulum membrane. Cooperates with the reticulon proteins and tubule-shaping DP1 family proteins to generate and maintain the structure of the tubular endoplasmic reticulum network. Has GTPase activity, which is required for its function in ER organization. This chain is Protein SEY1, found in Yarrowia lipolytica (strain CLIB 122 / E 150) (Yeast).